Reading from the N-terminus, the 25-residue chain is Snaclec bothroalternin subunit alpha/beta (25 aa).

Positions 1-25 constitute a C-type lectin domain; it reads DCPSDWSNHEGHCYRVFNEWMNWAD. C2 and C13 are oxidised to a cystine.

The protein belongs to the snaclec family. Heterodimer of subunits alpha and beta; disulfide-linked. In terms of tissue distribution, expressed by the venom gland.

Its subcellular location is the secreted. Thrombin (F2) inhibitor that inhibits aggregation of rabbit platelets induced by alpha-thrombin. This Bothrops alternatus (Urutu) protein is Snaclec bothroalternin subunit alpha/beta.